A 114-amino-acid chain; its full sequence is FK506-binding protein 1 (114 aa).

N-acetylserine is present on Ser2. Residues 26–114 enclose the PPIase FKBP-type domain; the sequence is GDLVTIHYTG…VFDVELLKVN (89 aa). Ser51 is modified (phosphoserine).

It belongs to the FKBP-type PPIase family. FKBP1 subfamily. As to quaternary structure, interacts with HOM3; the interaction is direct, plays a role in feedback inhibition of aspartokinase by threonine, and is inhibited by tacrolimus and sirolimus. Interacts with HMO1. Interacts with FAP1.

The protein localises to the cytoplasm. It localises to the mitochondrion. It catalyses the reaction [protein]-peptidylproline (omega=180) = [protein]-peptidylproline (omega=0). PPIases accelerate the folding of proteins. It catalyzes the cis-trans isomerization of proline imidic peptide bonds in oligopeptides. Plays a role in feedback inhibition of the pathway synthesizing the aspartate family of amino acids by binding to aspartokinase. In Saccharomyces cerevisiae (strain ATCC 204508 / S288c) (Baker's yeast), this protein is FK506-binding protein 1 (FPR1).